Here is a 558-residue protein sequence, read N- to C-terminus: Serine palmitoyltransferase 1 (558 aa).

Residues 1-49 lie on the Lumenal side of the membrane; sequence MAHIPEVLPKSIPIPAFIVTTSSYLWYYFNLVLTQIPGGQFIVSYIKKS. A helical membrane pass occupies residues 50–84; it reads HHDDPYRTTVEIGLILYGIIYYLSKPQQKKSLQAQ. Topologically, residues 85–341 are cytoplasmic; the sequence is KPNLSPQEID…GRGLSEHFNM (257 aa). At Thr121 the chain carries Phosphothreonine. The helical transmembrane segment at 342-371 threads the bilayer; that stretch reads DRATAIDITVGSMATALGSTGGFVLGDSVM. Residues 372-424 lie on the Lumenal side of the membrane; sequence CLHQRIGSNAYCFSACLPAYTVTSVSKVLKLMDSNNDAVQTLQKLSKSLHDSF. Residues 425 to 457 traverse the membrane as a helical segment; that stretch reads ASDDSLRSYVIVTSSPVSAVLHLQLTPAYRSRK. At 458-558 the chain is on the cytoplasmic side; that stretch reads FGYTCEQLFE…ILACCQESNK (101 aa).

It belongs to the class-II pyridoxal-phosphate-dependent aminotransferase family. As to quaternary structure, LCB1 and LCB2 encode essential subunits of the enzyme and form a heterodimer. Component of the SPOTS complex, at least composed of LCB1/2 (LCB1 and/or LCB2), ORM1/2 (ORM1 and/or ORM2), SAC1 and TSC3. Interacts with LCB2 and TSC3. The cofactor is pyridoxal 5'-phosphate.

It localises to the cytoplasm. The protein localises to the endoplasmic reticulum membrane. It catalyses the reaction L-serine + hexadecanoyl-CoA + H(+) = 3-oxosphinganine + CO2 + CoA. Its pathway is lipid metabolism; sphingolipid metabolism. In terms of biological role, component of serine palmitoyltransferase (SPT), which catalyzes the committed step in the synthesis of sphingolipids, the condensation of serine with palmitoyl CoA to form the long chain base 3-ketosphinganine. The polypeptide is Serine palmitoyltransferase 1 (LCB1) (Saccharomyces cerevisiae (strain ATCC 204508 / S288c) (Baker's yeast)).